The sequence spans 120 residues: Large ribosomal subunit protein eL18 (120 aa).

It belongs to the eukaryotic ribosomal protein eL18 family.

The chain is Large ribosomal subunit protein eL18 from Pyrococcus horikoshii (strain ATCC 700860 / DSM 12428 / JCM 9974 / NBRC 100139 / OT-3).